Consider the following 313-residue polypeptide: Porphobilinogen deaminase (313 aa).

C241 bears the S-(dipyrrolylmethanemethyl)cysteine mark.

The protein belongs to the HMBS family. Monomer. Requires dipyrromethane as cofactor.

It catalyses the reaction 4 porphobilinogen + H2O = hydroxymethylbilane + 4 NH4(+). It participates in porphyrin-containing compound metabolism; protoporphyrin-IX biosynthesis; coproporphyrinogen-III from 5-aminolevulinate: step 2/4. Its pathway is porphyrin-containing compound metabolism; chlorophyll biosynthesis. Tetrapolymerization of the monopyrrole PBG into the hydroxymethylbilane pre-uroporphyrinogen in several discrete steps. The protein is Porphobilinogen deaminase of Chlorobium luteolum (strain DSM 273 / BCRC 81028 / 2530) (Pelodictyon luteolum).